We begin with the raw amino-acid sequence, 169 residues long: Large ribosomal subunit protein uL10 (169 aa).

This sequence belongs to the universal ribosomal protein uL10 family. Part of the ribosomal stalk of the 50S ribosomal subunit. The N-terminus interacts with L11 and the large rRNA to form the base of the stalk. The C-terminus forms an elongated spine to which L12 dimers bind in a sequential fashion forming a multimeric L10(L12)X complex.

In terms of biological role, forms part of the ribosomal stalk, playing a central role in the interaction of the ribosome with GTP-bound translation factors. This is Large ribosomal subunit protein uL10 from Staphylococcus saprophyticus subsp. saprophyticus (strain ATCC 15305 / DSM 20229 / NCIMB 8711 / NCTC 7292 / S-41).